The sequence spans 935 residues: Progesterone receptor (935 aa).

Residues 1–49 (MTELKAKGLRAPHVAGSPSSPKVGSPLPCRQATGQFPGSQTSDTLPEVS) form a disordered region. Residues 1–164 (MTELKAKGLR…PATQRVLSPL (164 aa)) are AF3; mediates transcriptional activation. The interval 1–568 (MTELKAKGLR…YSFESLPQKI (568 aa)) is modulating, Pro-Rich. Residue Ser-20 is modified to Phosphoserine. Residues 32–44 (ATGQFPGSQTSDT) show a composition bias toward polar residues. The short motif at 55-59 (LDGLL) is the LXXL motif 1 element. The segment at 62 to 158 (RICQAQDPPD…EDPPAAPATQ (97 aa)) is disordered. Ser-81 is modified (phosphoserine). The LXXL motif 2 motif lies at 115 to 119 (LDTLW). Ser-130 and Ser-162 each carry phosphoserine. The tract at residues 165–305 (MSRSGGKAGD…LATTVTDFIH (141 aa)) is mediates transcriptional transrepression. Positions 183-187 (KVLPR) match the Nuclear localization signal motif. A disordered region spans residues 187–233 (RGLSPSRQLLLPTSGSPHWSGAPVKPSPQPAAVEVEEEDGSESEDSA). Ser-190 carries the phosphoserine modification. Residues 191-203 (PSRQLLLPTSGSP) are compositionally biased toward polar residues. Ser-213 carries the phosphoserine modification. Acidic residues predominate over residues 220–231 (EVEEEDGSESED). Position 294 is a phosphoserine; by MAPK1 (Ser-294). The disordered stretch occupies residues 328–365 (SYDGGSGAASAFAPPRSSPSASSTPVPGSDFPDCAYAP). Residues 335-356 (AASAFAPPRSSPSASSTPVPGS) show a composition bias toward low complexity. Ser-345 carries the post-translational modification Phosphoserine; by MAPK. A Glycyl lysine isopeptide (Lys-Gly) (interchain with G-Cter in SUMO); alternate cross-link involves residue Lys-388. A Glycyl lysine isopeptide (Lys-Gly) (interchain with G-Cter in ubiquitin); alternate cross-link involves residue Lys-388. The interval 390–452 (EEEGAEASTR…PASASVSSAS (63 aa)) is disordered. Position 400 is a phosphoserine; by CDK2 (Ser-400). A compositionally biased stretch (pro residues) spans 418 to 433 (PLGPPPPLPPRAPPSR). The segment covering 434–452 (PGEAAVTAAPASASVSSAS) has biased composition (low complexity). Residues 456–548 (STLECILYKA…VYPPYLNYLR (93 aa)) are AF1; mediates transcriptional activation. Residue Lys-533 forms a Glycyl lysine isopeptide (Lys-Gly) (interchain with G-Cter in SUMO) linkage. 2 NR C4-type zinc fingers span residues 569–589 (CLIC…CGSC) and 605–629 (CAGR…LRKC). The nuclear receptor DNA-binding region spans 569–641 (CLICGDEASG…AGMVLGGRKF (73 aa)). The residue at position 678 (Ser-678) is a Phosphoserine. Residues 681 to 915 (QDIQLIPPLI…EFPEMMSEVI (235 aa)) form the NR LBD domain. The interval 689–935 (LINLLLSIEP…MVKPLLFHKK (247 aa)) is AF2; mediates transcriptional activation. Position 768 (Arg-768) interacts with progesterone.

It belongs to the nuclear hormone receptor family. As to quaternary structure, interacts with SMARD1 and UNC45A. Interacts with CUEDC2; the interaction promotes ubiquitination, decreases sumoylation, and represses transcriptional activity. Interacts with PIAS3; the interaction promotes sumoylation of PR in a hormone-dependent manner, inhibits DNA-binding, and alters nuclear export. Interacts with SP1; the interaction requires ligand-induced phosphorylation on Ser-345 by ERK1/2-MAPK. Interacts with PRMT2. Interacts with NCOA2 and NCOA1. Interacts with KLF9. Interacts with GTF2B. Post-translationally, phosphorylated on multiple serine sites. Several of these sites are hormone-dependent. Phosphorylation on Ser-294 is highly hormone-dependent and modulates ubiquitination and sumoylation on Lys-388. Phosphorylation on Ser-345 also requires induction by hormone. Basal phosphorylation on Ser-81, Ser-162, Ser-190 and Ser-400 is increased in response to progesterone and can be phosphorylated in vitro by the CDK2-A1 complex. Increased levels of phosphorylation on Ser-400 also in the presence of EGF, heregulin, IGF, PMA and FBS. Phosphorylation at this site by CDK2 is ligand-independent, and increases nuclear translocation and transcriptional activity. Phosphorylation at Ser-162 and Ser-294, but not at Ser-190, is impaired during the G(2)/M phase of the cell cycle. Phosphorylation on Ser-345 by ERK1/2 MAPK is required for interaction with SP1. In terms of processing, sumoylation is hormone-dependent and represses transcriptional activity. Sumoylation on all three sites is enhanced by PIAS3. Desumoylated by SENP1. Sumoylation on Lys-388, the main site of sumoylation, is repressed by ubiquitination on the same site, and modulated by phosphorylation at Ser-294. Ubiquitination is hormone-dependent and represses sumoylation on the same site. Promoted by MAPK-mediated phosphorylation on Ser-294. Ubiquitinated by UBR5, leading to its degradation: UBR5 specifically recognizes and binds ligand-bound PGR when it is not associated with coactivators (NCOAs). In presence of NCOAs, the UBR5-degron is not accessible, preventing its ubiquitination and degradation. Post-translationally, palmitoylated by ZDHHC7 and ZDHHC21. Palmitoylation is required for plasma membrane targeting and for rapid intracellular signaling via ERK and AKT kinases and cAMP generation.

It is found in the nucleus. The protein resides in the cytoplasm. In terms of biological role, the steroid hormones and their receptors are involved in the regulation of eukaryotic gene expression and affect cellular proliferation and differentiation in target tissues. Transcriptional activator of several progesteron-dependent promoters in a variety of cell types. Involved in activation of SRC-dependent MAPK signaling on hormone stimulation. The chain is Progesterone receptor (PGR) from Sapajus apella (Brown-capped capuchin).